The chain runs to 2896 residues: Hemocyanin G-type, units Oda to Odg (2896 aa).

Residues 1-419 are functional unit Oda; that stretch reads NLIRKDVDAL…ADMVVVDKTG (419 aa). His-41 contributes to the Cu cation binding site. An intrachain disulfide couples Cys-47 to Cys-57. Residues 58-60 constitute a cross-link (2'-(S-cysteinyl)-histidine (Cys-His)); the sequence is CLH. Positions 60, 69, 178, 182, and 209 each coordinate Cu cation. Intrachain disulfides connect Cys-168/Cys-234 and Cys-321/Cys-333. A glycan (N-linked (GlcNAc...) asparagine) is linked at Asn-386. The functional unit Odb stretch occupies residues 420-834; sequence LNVRKDLQSL…KESGVVFDEL (415 aa). His-460 lines the Cu cation pocket. A disulfide bridge connects residues Cys-466 and Cys-477. A cross-link (2'-(S-cysteinyl)-histidine (Cys-His)) is located at residues 478–480; that stretch reads CVH. The Cu cation site is built by His-480, His-489, His-601, His-605, and His-632. Cys-591 and Cys-657 are oxidised to a cystine. N-linked (GlcNAc...) asparagine glycosylation is present at Asn-804. Positions 835 to 1254 are functional unit Odc; it reads YRSRRDVSSL…GIWVEPVTSA (420 aa). His-875 contacts Cu cation. Cys-881 and Cys-892 form a disulfide bridge. A cross-link (2'-(S-cysteinyl)-histidine (Cys-His)) is located at residues 893–895; sequence CHH. The Cu cation site is built by His-895, His-904, His-1013, His-1017, His-1044, and His-1292. Cysteines 1003 and 1070 form a disulfide. Residues 1255–1667 are functional unit Odd; the sequence is NRIRKNLNAL…ADIKSEEGNE (413 aa). A disulfide bridge links Cys-1298 with Cys-1309. The segment at residues 1310-1312 is a cross-link (2'-(S-cysteinyl)-histidine (Cys-His)); the sequence is CIH. Cu cation contacts are provided by His-1312, His-1321, His-1425, His-1429, and His-1456. The cysteines at positions 1415 and 1482 are disulfide-linked. Asn-1496 is a glycosylation site (N-linked (GlcNAc...) asparagine). Cys-1571 and Cys-1581 are disulfide-bonded. Asn-1634 is a glycosylation site (N-linked (GlcNAc...) asparagine). Residues 1668-2085 form a functional unit Ode region; sequence YLVRKNVERL…NEDADIDTPL (418 aa). His-1708 contributes to the Cu cation binding site. Cys-1714 and Cys-1725 form a disulfide bridge. The 2'-(S-cysteinyl)-histidine (Cys-His) cross-link spans 1726–1728; that stretch reads CLH. Residues His-1728, His-1737, His-1849, His-1853, and His-1880 each coordinate Cu cation. Intrachain disulfides connect Cys-1839-Cys-1906 and Cys-1997-Cys-2003. N-linked (GlcNAc...) asparagine glycosylation is present at Asn-2055. The functional unit Odf stretch occupies residues 2086 to 2502; sequence NHIRRNVESL…REVHKKTVGD (417 aa). His-2126 serves as a coordination point for Cu cation. Cys-2131 and Cys-2141 are oxidised to a cystine. The 2'-(S-cysteinyl)-histidine (Cys-His) cross-link spans 2142–2144; it reads CLH. Positions 2144 and 2153 each coordinate Cu cation. A glycan (N-linked (GlcNAc...) asparagine) is linked at Asn-2201. Intrachain disulfides connect Cys-2252/Cys-2319 and Cys-2406/Cys-2411. Cu cation is bound by residues His-2262, His-2266, and His-2293. A functional unit Odg region spans residues 2503-2896; the sequence is AIIRKNVNSL…VFLAPAKTTH (394 aa). A Cu cation-binding site is contributed by His-2543. A disulfide bond links Cys-2549 and Cys-2559. Asn-2553 carries an N-linked (GlcNAc...) asparagine glycan. Residues 2560–2562 constitute a cross-link (2'-(S-cysteinyl)-histidine (Cys-His)); sequence CQH. 5 residues coordinate Cu cation: His-2562, His-2571, His-2671, His-2675, and His-2702. 2 disulfides stabilise this stretch: Cys-2661-Cys-2728 and Cys-2815-Cys-2821.

Belongs to the tyrosinase family. Hemocyanin subfamily. In terms of assembly, decamers of large identical subunits (350 kDa), each containing 7 globular oxygen-binding functional units: ODA, ODB, ODC, ODD, ODE, ODF, and ODG. Decamer formation requires the presence of magnesium ions. Cu(2+) serves as cofactor.

Its function is as follows. Hemocyanins are copper-containing oxygen carriers occurring freely dissolved in the hemolymph of many mollusks and arthropods. This chain is Hemocyanin G-type, units Oda to Odg (ODHCY), found in Enteroctopus dofleini (North Pacific giant octopus).